Here is a 550-residue protein sequence, read N- to C-terminus: Protein UshA (550 aa).

The first 25 residues, 1–25, serve as a signal peptide directing secretion; it reads MRFSLSTTAAALAVSLAFAPGWAVA. Asp41, His43, Asp84, Asn116, His217, His252, and Gln254 together coordinate a divalent metal cation. Cys258 and Cys275 are joined by a disulfide. Substrate-binding positions include 375–379 and 498–504; these read RSKVR and FNALGGD.

This sequence belongs to the 5'-nucleotidase family. Co(2+) is required as a cofactor.

It localises to the periplasm. It catalyses the reaction UDP-sugar + H2O = UMP + alpha-D-aldose 1-phosphate.. The catalysed reaction is a ribonucleoside 5'-phosphate + H2O = a ribonucleoside + phosphate. Its function is as follows. Degradation of external UDP-glucose to uridine monophosphate and glucose-1-phosphate, which can then be used by the cell. This Yersinia enterocolitica serotype O:8 / biotype 1B (strain NCTC 13174 / 8081) protein is Protein UshA (ushA).